The sequence spans 199 residues: MKLTKVALFSLGLFGFSSMALAHGDHMHNHDTKMDTMSKDMMSMEKIVVPVQQLDPQNGNKDVGTVEITESAYGLVFTPKLHDLAHGLHGFHIHEKPSCEPKEKDGKLVAGLGAGGHWDPKQTQKHGYPWSDDAHMGDLPALFVMHDGSATTPVLAPRLKKLAEVKGHSLMIHAGGDNHSDHPAPLGGGGPRMACGVIK.

The signal sequence occupies residues 1–22 (MKLTKVALFSLGLFGFSSMALA). Positions 92, 94, and 117 each coordinate Cu cation. A disulfide bridge links Cys-99 with Cys-195. Zn(2+) contacts are provided by His-117, His-126, His-135, and Asp-138. His-173 is a binding site for Cu cation.

It belongs to the Cu-Zn superoxide dismutase family. In terms of assembly, homodimer. Cu cation is required as a cofactor. Requires Zn(2+) as cofactor.

The protein resides in the periplasm. The catalysed reaction is 2 superoxide + 2 H(+) = H2O2 + O2. Destroys radicals which are normally produced within the cells and which are toxic to biological systems. May play a role in the interactive biology of organisms with their hosts and so contribute to their capacity to cause disease. This Haemophilus ducreyi (strain 35000HP / ATCC 700724) protein is Superoxide dismutase [Cu-Zn] (sodC).